The primary structure comprises 217 residues: Acyl-homoserine-lactone synthase (217 aa).

Belongs to the autoinducer synthase family.

The catalysed reaction is a fatty acyl-[ACP] + S-adenosyl-L-methionine = an N-acyl-L-homoserine lactone + S-methyl-5'-thioadenosine + holo-[ACP] + H(+). In terms of biological role, required for the synthesis of OHHL (N-(3-oxohexanoyl)-L-homoserine lactone), an autoinducer molecule which binds to ExpR and thus acts in virulence (soft rot disease) through the activation of genes for plant tissue macerating enzymes. The protein is Acyl-homoserine-lactone synthase (expI) of Pectobacterium parmentieri.